We begin with the raw amino-acid sequence, 137 residues long: Ribosome-binding factor A (137 aa).

Belongs to the RbfA family. As to quaternary structure, monomer. Binds 30S ribosomal subunits, but not 50S ribosomal subunits or 70S ribosomes.

The protein localises to the cytoplasm. Functionally, one of several proteins that assist in the late maturation steps of the functional core of the 30S ribosomal subunit. Associates with free 30S ribosomal subunits (but not with 30S subunits that are part of 70S ribosomes or polysomes). Required for efficient processing of 16S rRNA. May interact with the 5'-terminal helix region of 16S rRNA. The protein is Ribosome-binding factor A of Rhodopseudomonas palustris (strain TIE-1).